Consider the following 1085-residue polypeptide: Activating transcription factor 7-interacting protein 1 (1085 aa).

9 disordered regions span residues 1-22 (MDNT…RASD), 47-109 (GKHE…VNVT), 127-245 (LGSN…NTDS), 329-381 (PNKS…VHSK), 469-499 (AAKE…ANAN), 517-560 (RNVG…TSSP), 650-843 (ASTN…TTIH), 889-910 (NSVR…QTGS), and 932-975 (GAPQ…ANTS). Residues 54 to 64 (SDLNSPLSNTD) show a composition bias toward polar residues. 2 stretches are compositionally biased toward basic and acidic residues: residues 82-91 (SEIKRPESRA) and 133-150 (NFHE…RESD). Composition is skewed to polar residues over residues 151-165 (TPSG…NSFS) and 173-182 (NDITIISNSP). Basic and acidic residues-rich tracts occupy residues 347–379 (EREV…DSVH) and 469–479 (AAKEDMKKKQE). A coiled-coil region spans residues 446-480 (NKRHKTVLTELQAKITRLTKRFGAAKEDMKKKQEN). Composition is skewed to low complexity over residues 487–499 (SSGK…ANAN), 529–547 (APVS…TPAS), and 651–666 (STNT…VSSP). A compositionally biased stretch (polar residues) spans 667–717 (GVQRNSPASAGSVRTTLAVQAVSTTHPVAQTTRTSLPTVGTSGLHNSTSSR). The span at 732–743 (TAPTEPPTITAP) shows a compositional bias: low complexity. 3 stretches are compositionally biased toward polar residues: residues 746 to 775 (ENQT…VTGS), 792 to 810 (SSQA…AQSI), and 830 to 843 (TGVP…TTIH). Positions 950-968 (PRPVHPAPLPEAPQPPRLP) are enriched in pro residues. Positions 976–1082 (LPQKPQLKLA…DPQSTDVISS (107 aa)) constitute a Fibronectin type-III domain.

It belongs to the MCAF family.

Its subcellular location is the nucleus. In terms of biological role, recruiter that couples transcriptional factors to general transcription apparatus and thereby modulates transcription regulation and chromatin formation. Can both act as an activator or a repressor depending on the context. Mediates MBD1-dependent transcriptional repression, probably by recruiting complexes containing histone methyltransferase activity. May belong to a complex that represses transcription and couples DNA methylation and histone H3 'Lys-9' trimethylation (H3K9me3). This chain is Activating transcription factor 7-interacting protein 1 (ATF7IP), found in Gallus gallus (Chicken).